We begin with the raw amino-acid sequence, 139 residues long: Large-conductance mechanosensitive channel (139 aa).

2 helical membrane-spanning segments follow: residues 16 to 36 and 79 to 99; these read VIDL…VKSL and GAFV…FLLV.

This sequence belongs to the MscL family. As to quaternary structure, homopentamer.

It localises to the cell inner membrane. Channel that opens in response to stretch forces in the membrane lipid bilayer. May participate in the regulation of osmotic pressure changes within the cell. This is Large-conductance mechanosensitive channel from Caulobacter vibrioides (strain ATCC 19089 / CIP 103742 / CB 15) (Caulobacter crescentus).